Reading from the N-terminus, the 444-residue chain is MAAETSIRKLPSLSGLRHRRNPLEDNPYFHPSNGFYITPSDVILAQVAYDHSAHSQSRVAYHRAGPRREIMYEPSAVKAAIVTCGGLCPGMNTVIRELVVGLWELYGVREIYGIPAGYRGFYSMKAVKLDPKAVHDWHKKGGTVLATSRGGFHLQKIVDAIHLNGYNQVYIIGGDGTMRGAVEIFKEISLRKLEVGITVIPKTVDNDVGIIDRSFGFQTAVEMAQEAISAAHVEAESAVNGIGLVKLMGRSTGHIALHATLSSRDVDCCLIPEMDFYLEGKGGLFEFLEKRLKERGHAVLVVAEGAGQEMIPRNESQKQERDESGNAVFLDVGVWFKSVLKAWWEREHPDELFTVKYIDPTYMIRAVPANATDNLYCTLLAHSAIHGVMAGYTGFVPGPINGNYAYIPLEEVAQTKNQVNTRDHKWAWVRSVTNQPDFETNVKG.

Ser55 is modified (phosphoserine). ATP-binding positions include Gly86, 149–150 (RG), and 174–177 (GDGT). Asp175 contributes to the Mg(2+) binding site. Substrate-binding positions include 203-205 (TVD), 248-250 (MGR), Glu304, and 362-365 (YMIR). Asp205 (proton acceptor) is an active-site residue.

It belongs to the phosphofructokinase type A (PFKA) family. PPi-dependent PFK group II subfamily. Atypical ATP-dependent clade 'X' sub-subfamily. In terms of assembly, homotetramer. Mg(2+) serves as cofactor. In terms of tissue distribution, mostly expressed in roots and stems.

It is found in the cytoplasm. The enzyme catalyses beta-D-fructose 6-phosphate + ATP = beta-D-fructose 1,6-bisphosphate + ADP + H(+). It participates in carbohydrate degradation; glycolysis; D-glyceraldehyde 3-phosphate and glycerone phosphate from D-glucose: step 3/4. Its activity is regulated as follows. Allosterically activated by AMP. In terms of biological role, catalyzes the phosphorylation of D-fructose 6-phosphate to fructose 1,6-bisphosphate by ATP, the first committing step of glycolysis. The chain is ATP-dependent 6-phosphofructokinase 2 from Arabidopsis thaliana (Mouse-ear cress).